The primary structure comprises 542 residues: Plasminogen-binding protein PgbB (542 aa).

The segment at K399–K542 is disordered. Composition is skewed to basic and acidic residues over residues Q418–V435 and V447–R456. The span at D457–T467 shows a compositional bias: polar residues. A compositionally biased stretch (basic and acidic residues) spans N481 to K542.

It is found in the cell surface. Functionally, binds plasminogen, specifically, and in a concentration and lysine-dependent manner. Plasminogen is the precursor of plasmin, a serine protease that cleaves fibrin, fibronectin, laminin and vitronectin. Acquisition of plasminogen/plasmin could enable H.pylori to degrade host components. This chain is Plasminogen-binding protein PgbB (pgbB), found in Helicobacter pylori (strain ATCC 700392 / 26695) (Campylobacter pylori).